Consider the following 179-residue polypeptide: Natural killer cells antigen CD94 (179 aa).

Residues 1 to 10 lie on the Cytoplasmic side of the membrane; it reads MAVFKTTLWR. Residues 11 to 31 traverse the membrane as a helical; Signal-anchor for type II membrane protein segment; sequence LISGTLGIICLSLMSTLGILL. The Extracellular portion of the chain corresponds to 32–179; the sequence is KNSFTKLSIE…NRYICKQQLI (148 aa). Disulfide bonds link Cys58/Cys70 and Cys61/Cys72. In terms of domain architecture, C-type lectin spans 68–175; sequence YRCNCYFISS…CEDKNRYICK (108 aa). 2 N-linked (GlcNAc...) asparagine glycosylation sites follow: Asn83 and Asn132. 2 disulfides stabilise this stretch: Cys89-Cys174 and Cys152-Cys166.

As to quaternary structure, can form disulfide-bonded heterodimer with NKG2 family members KLRC1 and KLRC2. KLRD1-KLRC1 heterodimer interacts with peptide-bound HLA-E-B2M heterotrimeric complex. KLRD1 plays a prominent role in directly interacting with HLA-E. KLRD1-KLRC1 interacts with much higher affinity with peptide-bound HLA-E-B2M than KLRD1-KLRC2. Interacts with the adapter protein TYROBP/DAP12; this interaction is required for cell surface expression and cell activation. In terms of tissue distribution, expressed in NK cell subsets (at protein level). Expressed in memory/effector CD8-positive alpha-beta T cell subsets (at protein level). Expressed in melanoma-specific cytotoxic T cell clones (at protein level). Expressed in terminally differentiated cytotoxic gamma-delta T cells (at protein level). KLRD1-KLRC1 and KLRD1-KLRC2 are differentially expressed in NK and T cell populations, with only minor subsets expressing both receptor complexes (at protein level).

Its subcellular location is the cell membrane. In terms of biological role, immune receptor involved in self-nonself discrimination. In complex with KLRC1 or KLRC2 on cytotoxic and regulatory lymphocyte subsets, recognizes non-classical major histocompatibility (MHC) class Ib molecule HLA-E loaded with self-peptides derived from the signal sequence of classical MHC class Ia and non-classical MHC class Ib molecules. Enables cytotoxic cells to monitor the expression of MHC class I molecules in healthy cells and to tolerate self. Primarily functions as a ligand binding subunit as it lacks the capacity to signal. Its function is as follows. KLRD1-KLRC1 acts as an immune inhibitory receptor. Key inhibitory receptor on natural killer (NK) cells that regulates their activation and effector functions. Dominantly counteracts T cell receptor signaling on a subset of memory/effector CD8-positive T cells as part of an antigen-driven response to avoid autoimmunity. On intraepithelial CD8-positive gamma-delta regulatory T cells triggers TGFB1 secretion, which in turn limits the cytotoxic programming of intraepithelial CD8-positive alpha-beta T cells, distinguishing harmless from pathogenic antigens. In HLA-E-rich tumor microenvironment, acts as an immune inhibitory checkpoint and may contribute to progressive loss of effector functions of NK cells and tumor-specific T cells, a state known as cell exhaustion. Upon HLA-E-peptide binding, transmits intracellular signals through KLRC1 immunoreceptor tyrosine-based inhibition motifs (ITIMs) by recruiting INPP5D/SHIP-1 and INPPL1/SHIP-2 tyrosine phosphatases to ITIMs, and ultimately opposing signals transmitted by activating receptors through dephosphorylation of proximal signaling molecules. Functionally, KLRD1-KLRC2 acts as an immune activating receptor. On cytotoxic lymphocyte subsets recognizes HLA-E loaded with signal sequence-derived peptides from non-classical MHC class Ib HLA-G molecules, likely playing a role in the generation and effector functions of adaptive NK cells and in maternal-fetal tolerance during pregnancy. Regulates the effector functions of terminally differentiated cytotoxic lymphocyte subsets, and in particular may play a role in adaptive NK cell response to viral infection. Upon HLA-E-peptide binding, transmits intracellular signals via the adapter protein TYROBP/DAP12, triggering the phosphorylation of proximal signaling molecules and cell activation. (Microbial infection) Viruses like human cytomegalovirus have evolved an escape mechanism whereby virus-induced down-regulation of host MHC class I molecules is coupled to the binding of viral peptides to HLA-E, restoring HLA-E expression and inducing HLA-E-dependent NK cell immune tolerance to infected cells. Recognizes HLA-E in complex with human cytomegalovirus UL40-derived peptide (VMAPRTLIL) and inhibits NK cell cytotoxicity. In terms of biological role, (Microbial infection) May recognize HLA-E in complex with HIV-1 gag/Capsid protein p24-derived peptide (AISPRTLNA) on infected cells and may inhibit NK cell cytotoxicity, a mechanism that allows HIV-1 to escape immune recognition. Its function is as follows. (Microbial infection) Upon SARS-CoV-2 infection, may contribute to functional exhaustion of cytotoxic NK cells and CD8-positive T cells. On NK cells, may recognize HLA-E in complex with SARS-CoV-2 S/Spike protein S1-derived peptide (LQPRTFLL) expressed on the surface of lung epithelial cells, inducing NK cell exhaustion and dampening antiviral immune surveillance. The protein is Natural killer cells antigen CD94 (KLRD1) of Homo sapiens (Human).